Here is a 134-residue protein sequence, read N- to C-terminus: ATP synthase epsilon chain, chloroplastic (134 aa).

This sequence belongs to the ATPase epsilon chain family. In terms of assembly, F-type ATPases have 2 components, CF(1) - the catalytic core - and CF(0) - the membrane proton channel. CF(1) has five subunits: alpha(3), beta(3), gamma(1), delta(1), epsilon(1). CF(0) has three main subunits: a, b and c.

It localises to the plastid. The protein resides in the chloroplast thylakoid membrane. Its function is as follows. Produces ATP from ADP in the presence of a proton gradient across the membrane. The sequence is that of ATP synthase epsilon chain, chloroplastic from Amborella trichopoda.